The primary structure comprises 38 residues: Photosystem II reaction center protein L (38 aa).

Residues 17-37 (SLYWGLLLIFVLAVLFSNYFF) traverse the membrane as a helical segment.

Belongs to the PsbL family. In terms of assembly, PSII is composed of 1 copy each of membrane proteins PsbA, PsbB, PsbC, PsbD, PsbE, PsbF, PsbH, PsbI, PsbJ, PsbK, PsbL, PsbM, PsbT, PsbX, PsbY, PsbZ, Psb30/Ycf12, at least 3 peripheral proteins of the oxygen-evolving complex and a large number of cofactors. It forms dimeric complexes.

Its subcellular location is the plastid. It localises to the chloroplast thylakoid membrane. In terms of biological role, one of the components of the core complex of photosystem II (PSII). PSII is a light-driven water:plastoquinone oxidoreductase that uses light energy to abstract electrons from H(2)O, generating O(2) and a proton gradient subsequently used for ATP formation. It consists of a core antenna complex that captures photons, and an electron transfer chain that converts photonic excitation into a charge separation. This subunit is found at the monomer-monomer interface and is required for correct PSII assembly and/or dimerization. The polypeptide is Photosystem II reaction center protein L (Antirrhinum majus (Garden snapdragon)).